Here is a 232-residue protein sequence, read N- to C-terminus: Small ribosomal subunit protein uS3 (232 aa).

A KH type-2 domain is found at 39–107 (VRRFLEQRLK…PVHVNIEEVR (69 aa)).

It belongs to the universal ribosomal protein uS3 family. Part of the 30S ribosomal subunit. Forms a tight complex with proteins S10 and S14.

In terms of biological role, binds the lower part of the 30S subunit head. Binds mRNA in the 70S ribosome, positioning it for translation. The protein is Small ribosomal subunit protein uS3 of Chromohalobacter salexigens (strain ATCC BAA-138 / DSM 3043 / CIP 106854 / NCIMB 13768 / 1H11).